The following is a 385-amino-acid chain: 4-hydroxy-3-methylbut-2-en-1-yl diphosphate synthase (flavodoxin) 2 (385 aa).

Residues Cys-280, Cys-283, Cys-315, and Glu-322 each contribute to the [4Fe-4S] cluster site.

It belongs to the IspG family. [4Fe-4S] cluster serves as cofactor.

The catalysed reaction is (2E)-4-hydroxy-3-methylbut-2-enyl diphosphate + oxidized [flavodoxin] + H2O + 2 H(+) = 2-C-methyl-D-erythritol 2,4-cyclic diphosphate + reduced [flavodoxin]. It participates in isoprenoid biosynthesis; isopentenyl diphosphate biosynthesis via DXP pathway; isopentenyl diphosphate from 1-deoxy-D-xylulose 5-phosphate: step 5/6. Functionally, converts 2C-methyl-D-erythritol 2,4-cyclodiphosphate (ME-2,4cPP) into 1-hydroxy-2-methyl-2-(E)-butenyl 4-diphosphate. The sequence is that of 4-hydroxy-3-methylbut-2-en-1-yl diphosphate synthase (flavodoxin) 2 from Streptomyces coelicolor (strain ATCC BAA-471 / A3(2) / M145).